A 359-amino-acid polypeptide reads, in one-letter code: Type-1 angiotensin II receptor (359 aa).

Topologically, residues 1 to 25 are extracellular; that stretch reads MALNSSADDGIKRIQDDCPKAGRHS. N-linked (GlcNAc...) asparagine glycosylation is present at Asn4. Positions 15 and 17 each coordinate angiotensin II. Intrachain disulfides connect Cys18–Cys274 and Cys101–Cys180. A helical transmembrane segment spans residues 26–55; it reads YIFVMIPTLYSIIFVVGIFGNSLVVIVIYF. Residues 56–61 lie on the Cytoplasmic side of the membrane; the sequence is YMKLKT. A helical membrane pass occupies residues 62-89; the sequence is VASVFLLNLALADLCFLLTLPVWAVYTA. The Extracellular portion of the chain corresponds to 90-98; it reads MEYRWPFGN. The helical transmembrane segment at 99–125 threads the bilayer; the sequence is HLCKIASAGISFNLYASVFLLTCLSID. The Cytoplasmic portion of the chain corresponds to 126–141; that stretch reads RYLAIVHPMKSRLRRT. Residues 142 to 165 traverse the membrane as a helical segment; that stretch reads MLVAKVTCVVIWLLAGLASLPAVI. Residues 166 to 190 lie on the Extracellular side of the membrane; that stretch reads HRNVYFIENTNSTVCAFHYESQNST. Arg167 contributes to the angiotensin II binding site. An N-linked (GlcNAc...) asparagine glycan is attached at Asn176. 3 residues coordinate angiotensin II: Phe182, His183, and Tyr184. Asn188 carries an N-linked (GlcNAc...) asparagine glycan. The helical transmembrane segment at 191–216 threads the bilayer; the sequence is LPVGLGLTKNILGFMFPFLIILTSYT. Lys199 provides a ligand contact to angiotensin II. Residues 217–239 lie on the Cytoplasmic side of the membrane; it reads LIWKALKKAYEIQKNKPRNDDIF. Residues 240 to 268 form a helical membrane-spanning segment; sequence RIIMAIVLFFFFSWIPHQIFTFLDVLIQL. The Extracellular portion of the chain corresponds to 269 to 278; the sequence is GVIRDCKIAD. The chain crosses the membrane as a helical span at residues 279-304; it reads VVDTAMPITICIAYFNNCLNPLFYGF. Over 305-359 the chain is Cytoplasmic; it reads LGKKFKKYFLQLLKYIPPKAKSHSSLSTKMSTLSYRPSDNMNSSAKKPASCFEVE. Cys355 is lipidated: S-palmitoyl cysteine.

It belongs to the G-protein coupled receptor 1 family. Interacts with MAS1. Interacts with ARRB1. Interacts with FLNA (via filamin repeat 21); increases PKA-mediated phosphorylation of FLNA. Post-translationally, C-terminal Ser or Thr residues may be phosphorylated.

It is found in the cell membrane. In terms of biological role, receptor for angiotensin II, a vasoconstricting peptide, which acts as a key regulator of blood pressure and sodium retention by the kidney. The activated receptor in turn couples to G-alpha proteins G(q) (GNAQ, GNA11, GNA14 or GNA15) and thus activates phospholipase C and increases the cytosolic Ca(2+) concentrations, which in turn triggers cellular responses such as stimulation of protein kinase C. This is Type-1 angiotensin II receptor (AGTR1) from Meriones unguiculatus (Mongolian jird).